Consider the following 187-residue polypeptide: Pterin-4-alpha-carbinolamine dehydratase 2, mitochondrial (187 aa).

Residues 1–33 (MSRLLLPKLFSISRTQVPAASLFNNLYRRHKRF) constitute a mitochondrion transit peptide.

Belongs to the pterin-4-alpha-carbinolamine dehydratase family.

It localises to the mitochondrion. It catalyses the reaction (4aS,6R)-4a-hydroxy-L-erythro-5,6,7,8-tetrahydrobiopterin = (6R)-L-erythro-6,7-dihydrobiopterin + H2O. Involved in tetrahydrobiopterin biosynthesis. Possesses pterin-4-alpha-carbinolamine dehydratase activity when expressed in a bacterial heterolgous system. The chain is Pterin-4-alpha-carbinolamine dehydratase 2, mitochondrial from Arabidopsis thaliana (Mouse-ear cress).